A 79-amino-acid polypeptide reads, in one-letter code: Protein FAM236C (79 aa).

The tract at residues 19–48 is disordered; that stretch reads KGPQKDPEELVAVSDTAEDPSSGTGLPREP.

It belongs to the FAM236 family.

This Homo sapiens (Human) protein is Protein FAM236C.